We begin with the raw amino-acid sequence, 108 residues long: Protein Asterix (108 aa).

Residues 1 to 29 (MNMTVDPRRKEKINRYKAPKNQGQSGGAN) are disordered. A helical membrane pass occupies residues 80–96 (VLSSFMLSVSAVVMSYL).

Belongs to the Asterix family.

It localises to the membrane. The polypeptide is Protein Asterix (Drosophila melanogaster (Fruit fly)).